A 309-amino-acid chain; its full sequence is Protein FdhE (309 aa).

Belongs to the FdhE family.

The protein resides in the cytoplasm. In terms of biological role, necessary for formate dehydrogenase activity. The polypeptide is Protein FdhE (Salmonella choleraesuis (strain SC-B67)).